The chain runs to 204 residues: Urease accessory protein UreG (204 aa).

Residue 11 to 18 (GPVGAGKT) participates in GTP binding.

The protein belongs to the SIMIBI class G3E GTPase family. UreG subfamily. In terms of assembly, homodimer. UreD, UreF and UreG form a complex that acts as a GTP-hydrolysis-dependent molecular chaperone, activating the urease apoprotein by helping to assemble the nickel containing metallocenter of UreC. The UreE protein probably delivers the nickel.

It localises to the cytoplasm. In terms of biological role, facilitates the functional incorporation of the urease nickel metallocenter. This process requires GTP hydrolysis, probably effectuated by UreG. The polypeptide is Urease accessory protein UreG (Staphylococcus aureus (strain Mu3 / ATCC 700698)).